Here is an 854-residue protein sequence, read N- to C-terminus: Arsenate respiratory reductase molybdopterin-containing subunit ArrA (854 aa).

The segment at residues 1–41 (MKKENQVNLGRRQLLKSTAAGTVLTGIGGTLSFTPIVEGIA) is a signal peptide (tat-type signal). Positions 54 to 110 (GEWLATTCQGCTSWCAKQIYVMDGRALKVRGNPNSGVHGMSSCPRQHLSLQQVYDPD) constitute a 4Fe-4S Mo/W bis-MGD-type domain. Residues C61, C64, C68, and C96 each coordinate [4Fe-4S] cluster. R165 provides a ligand contact to arsenite. Y166 contributes to the arsenate binding site. Arsenite is bound at residue H189. S190 is a binding site for arsenate. A Mo-bis(molybdopterin guanine dinucleotide)-binding site is contributed by C193. K198 provides a ligand contact to arsenate. Arsenite is bound at residue Y210.

Belongs to the prokaryotic molybdopterin-containing oxidoreductase family. As to quaternary structure, heterodimer composed of one large subunit (ArrA) and one small subunit (ArrB). The cofactor is [4Fe-4S] cluster. It depends on Mo-bis(molybdopterin guanine dinucleotide) as a cofactor. In terms of processing, predicted to be exported by the Tat system. The position of the signal peptide cleavage has not been experimentally proven.

The protein localises to the periplasm. The enzyme catalyses arsenite + A + H2O = arsenate + AH2 + H(+). Its activity is regulated as follows. Phosphate is a competitive inhibitor. Its function is as follows. Component of the arsenate respiratory reductase (Arr) complex, which catalyzes the reduction of arsenate (As(V)) to arsenite (As(III)). ArrA is the arsenate-binding subunit. The periplasmic localization of this complex may allow the cell to couple arsenate reduction to energy production before arsenate can be transported to the cell cytoplasm and enter the ars detoxification pathway, an energy-requiring process. The sequence is that of Arsenate respiratory reductase molybdopterin-containing subunit ArrA from Shewanella sp. (strain ANA-3).